A 21-amino-acid chain; its full sequence is Testis ecdysiotropin peptide 1 (21 aa).

Residues 1–21 (ISDFDEYEPLNDADNNEVLDF) form a disordered region.

In terms of biological role, start or boost ecdysteroid synthesis in testis of larvae and pupae. The protein is Testis ecdysiotropin peptide 1 of Lymantria dispar (Gypsy moth).